The following is a 406-amino-acid chain: Odorant receptor 42a (406 aa).

The Cytoplasmic segment spans residues 1 to 44 (MDLRRWFPTLYTQSKDSPVRSRDATLYLLRCVFLMGVRKPPAKF). Residues 45 to 65 (FVAYVLWSFALNFCSTFYQPI) traverse the membrane as a helical segment. Topologically, residues 66–86 (GFLTGYISHLSEFSPGEFLTS) are extracellular. The helical transmembrane segment at 87 to 107 (LQVAFNAWSCSTKVLIVWALV) threads the bilayer. Residues 108 to 142 (KRFDEANNLLDEMDRRITDPGERLQIHRAVSLSNR) are Cytoplasmic-facing. The helical transmembrane segment at 143 to 163 (IFFFFMAVYMVYATNTFLSAI) threads the bilayer. Residues 164-181 (FIGRPPYQNYYPFLDWRS) are Extracellular-facing. Residues 182-202 (STLHLALQAGLEYFAMAGACF) form a helical membrane-spanning segment. At 203–271 (QDVCVDCYPV…DCLRPVISGT (69 aa)) the chain is on the cytoplasmic side. The helical transmembrane segment at 272 to 292 (IFVQFLVVGLVLGFTLINIVL) threads the bilayer. Residues 293-298 (FANLGS) are Extracellular-facing. A helical membrane pass occupies residues 299–319 (AIAALSFMAAVLLETTPFCIL). Over 320–359 (CNYLTEDCYKLADALFQSNWIDEEKRYQKTLMYFLQKLQQ) the chain is Cytoplasmic. A helical transmembrane segment spans residues 360–380 (PITFMAMNVFPISVGTNISVT). Residues 381 to 406 (KFSFSVFTLVKQMNISEKLAKSEMEE) are Extracellular-facing. An N-linked (GlcNAc...) asparagine glycan is attached at Asn394.

The protein belongs to the insect chemoreceptor superfamily. Heteromeric odorant receptor channel (TC 1.A.69) family. Or2a subfamily. Interacts with Orco. Complexes exist early in the endomembrane system in olfactory sensory neurons (OSNs), coupling these complexes to the conserved ciliary trafficking pathway.

Its subcellular location is the cell membrane. Functionally, odorant receptor which mediates acceptance or avoidance behavior, depending on its substrates. The odorant receptor repertoire encodes a large collection of odor stimuli that vary widely in identity, intensity, and duration. May form a complex with Orco to form odorant-sensing units, providing sensitive and prolonged odorant signaling and calcium permeability. Involved in the behavioral responses to butanol, ethyl acetate, propyl acetate, and pentyl acetate. Also responds to pyrazines. This chain is Odorant receptor 42a (Or42a), found in Drosophila melanogaster (Fruit fly).